The chain runs to 547 residues: G protein-coupled receptor associated sorting protein 3 (547 aa).

A compositionally biased stretch (basic residues) spans 1–10 (MAGTKNKTRA). Disordered regions lie at residues 1–32 (MAGT…EATG) and 80–102 (TLGK…STCK).

Belongs to the GPRASP family. As to quaternary structure, homodimer. Highly expressed in brain. Not expressed in lung or liver. Down-regulated in brain from patients suffering from Alzheimer disease.

The protein resides in the cytoplasm. Its subcellular location is the nucleus. Its function is as follows. Survival and differentiation promoting protein that plays a role in the regulation of neurosynaptogenesis. Induces phosphatase PP2A activity which results in APP dephosphorylation and inhibits BACE1-mediated processing of APP. The polypeptide is G protein-coupled receptor associated sorting protein 3 (Homo sapiens (Human)).